Here is a 453-residue protein sequence, read N- to C-terminus: Gamma-aminobutyric acid receptor subunit alpha-6 (453 aa).

The N-terminal stretch at 1–19 is a signal peptide; sequence MLLLLPWLFSLLWIENAQA. Residues 20 to 243 are Extracellular-facing; that stretch reads QLEDEGNFYS…FHLQRKMGYF (224 aa). An N-linked (GlcNAc...) asparagine glycan is attached at Asn-31. Arg-84 contributes to the 4-aminobutanoate binding site. Asn-128 and Asn-141 each carry an N-linked (GlcNAc...) asparagine glycan. 4-aminobutanoate is bound at residue Thr-147. An intrachain disulfide couples Cys-156 to Cys-170. The helical transmembrane segment at 244–264 threads the bilayer; it reads MIQIYTPCIMTVILSQVSFWI. The Cytoplasmic portion of the chain corresponds to 265–270; sequence NKESVP. The helical transmembrane segment at 271–290 threads the bilayer; it reads ARTVFGITTVLTMTTLSISA. At 291-304 the chain is on the extracellular side; sequence RHSLPKVSYATAMD. The helical transmembrane segment at 305–325 threads the bilayer; that stretch reads WFIAVCFAFVFSALIEFAAVN. Topologically, residues 326–422 are cytoplasmic; it reads YFTNLQSQKA…GTSKIDQYSR (97 aa). Ser-375 bears the Phosphoserine mark. Thr-403 is subject to Phosphothreonine. The helical transmembrane segment at 423-443 threads the bilayer; that stretch reads ILFPVAFAGFNLVYWIVYLSK. Over 444–453 the chain is Extracellular; sequence DTMEVSSTVE.

Belongs to the ligand-gated ion channel (TC 1.A.9) family. Gamma-aminobutyric acid receptor (TC 1.A.9.5) subfamily. GABRA6 sub-subfamily. As to quaternary structure, heteropentamer, formed by a combination of alpha (GABRA1-6), beta (GABRB1-3), gamma (GABRG1-3), delta (GABRD), epsilon (GABRE), rho (GABRR1-3), pi (GABRP) and theta (GABRQ) chains, each subunit exhibiting distinct physiological and pharmacological properties. Binds UBQLN1. Expressed in brain, in cerebellar granule cells.

Its subcellular location is the postsynaptic cell membrane. The protein resides in the cell membrane. It catalyses the reaction chloride(in) = chloride(out). Its function is as follows. Alpha subunit of the heteropentameric ligand-gated chloride channel gated by gamma-aminobutyric acid (GABA), a major inhibitory neurotransmitter in the brain. GABA-gated chloride channels, also named GABA(A) receptors (GABAAR), consist of five subunits arranged around a central pore and contain GABA active binding site(s) located at the alpha and beta subunit interface(s). When activated by GABA, GABAARs selectively allow the flow of chloride anions across the cell membrane down their electrochemical gradient. Alpha-6/GABRA6 subunits are found at both synaptic and extrasynaptic sites. Chloride influx into the postsynaptic neuron following GABAAR opening decreases the neuron ability to generate a new action potential, thereby reducing nerve transmission. Extrasynaptic alpha-6-containing receptors contribute to the tonic GABAergic inhibition. Alpha-6 subunits are also present on glutamatergic synapses. This Rattus norvegicus (Rat) protein is Gamma-aminobutyric acid receptor subunit alpha-6.